Here is a 115-residue protein sequence, read N- to C-terminus: Large ribosomal subunit protein bL20 (115 aa).

This sequence belongs to the bacterial ribosomal protein bL20 family.

Its function is as follows. Binds directly to 23S ribosomal RNA and is necessary for the in vitro assembly process of the 50S ribosomal subunit. It is not involved in the protein synthesizing functions of that subunit. This is Large ribosomal subunit protein bL20 from Chlorobaculum parvum (strain DSM 263 / NCIMB 8327) (Chlorobium vibrioforme subsp. thiosulfatophilum).